A 262-amino-acid polypeptide reads, in one-letter code: WUSCHEL-related homeobox 11 (262 aa).

Residues 1 to 11 (MDGGHSPDRHA) are compositionally biased toward basic and acidic residues. Disordered regions lie at residues 1 to 21 (MDGG…PVRS) and 79 to 115 (RRRQ…GHAG). The homeobox DNA-binding region spans 18–82 (PVRSRWTPKP…NRRSRSRRRQ (65 aa)). Residues 84–112 (QLQAQAQAAAAAASSGSPPTASSGGLAPG) are compositionally biased toward low complexity.

It belongs to the WUS homeobox family. In terms of assembly, interacts with ERF3.

It localises to the nucleus. Functionally, transcription factor which may be involved in developmental processes. Promotes the development of crown roots (both initiation and elongation), main components of the fibrous root system, by regulating the expression of genes required for crown root development and hormone-responsive genes involved in cytokinin (e.g. RR1, RR2, RR3 and RR4) and auxin (e.g. IAA5, IAA11, IAA23 and IAA31) signaling. The polypeptide is WUSCHEL-related homeobox 11 (Oryza sativa subsp. indica (Rice)).